The chain runs to 191 residues: Xanthine phosphoribosyltransferase (191 aa).

Residues leucine 20 and asparagine 27 each coordinate xanthine. Position 128-132 (128-132 (ANGQA)) interacts with 5-phospho-alpha-D-ribose 1-diphosphate. Position 156 (lysine 156) interacts with xanthine.

This sequence belongs to the purine/pyrimidine phosphoribosyltransferase family. Xpt subfamily. Homodimer.

Its subcellular location is the cytoplasm. It catalyses the reaction XMP + diphosphate = xanthine + 5-phospho-alpha-D-ribose 1-diphosphate. Its pathway is purine metabolism; XMP biosynthesis via salvage pathway; XMP from xanthine: step 1/1. Its function is as follows. Converts the preformed base xanthine, a product of nucleic acid breakdown, to xanthosine 5'-monophosphate (XMP), so it can be reused for RNA or DNA synthesis. The polypeptide is Xanthine phosphoribosyltransferase (Acinetobacter baumannii (strain AB307-0294)).